Here is a 248-residue protein sequence, read N- to C-terminus: Carbohydrate deacetylase (248 aa).

The Mg(2+) site is built by His59 and His121.

This sequence belongs to the YdjC deacetylase family. It depends on Mg(2+) as a cofactor.

Its function is as follows. Probably catalyzes the deacetylation of acetylated carbohydrates an important step in the degradation of oligosaccharides. This is Carbohydrate deacetylase from Brevibacillus brevis (strain 47 / JCM 6285 / NBRC 100599).